We begin with the raw amino-acid sequence, 508 residues long: Bifunctional purine biosynthesis protein PurH (508 aa).

Residues 1–144 enclose the MGS-like domain; it reads MTRALLSVSD…KNFASVLPIV (144 aa).

Belongs to the PurH family.

It catalyses the reaction (6R)-10-formyltetrahydrofolate + 5-amino-1-(5-phospho-beta-D-ribosyl)imidazole-4-carboxamide = 5-formamido-1-(5-phospho-D-ribosyl)imidazole-4-carboxamide + (6S)-5,6,7,8-tetrahydrofolate. The catalysed reaction is IMP + H2O = 5-formamido-1-(5-phospho-D-ribosyl)imidazole-4-carboxamide. It participates in purine metabolism; IMP biosynthesis via de novo pathway; 5-formamido-1-(5-phospho-D-ribosyl)imidazole-4-carboxamide from 5-amino-1-(5-phospho-D-ribosyl)imidazole-4-carboxamide (10-formyl THF route): step 1/1. It functions in the pathway purine metabolism; IMP biosynthesis via de novo pathway; IMP from 5-formamido-1-(5-phospho-D-ribosyl)imidazole-4-carboxamide: step 1/1. The chain is Bifunctional purine biosynthesis protein PurH from Leuconostoc mesenteroides subsp. mesenteroides (strain ATCC 8293 / DSM 20343 / BCRC 11652 / CCM 1803 / JCM 6124 / NCDO 523 / NBRC 100496 / NCIMB 8023 / NCTC 12954 / NRRL B-1118 / 37Y).